Consider the following 306-residue polypeptide: Ribosomal protein L11 methyltransferase (306 aa).

Residues threonine 139, glycine 173, aspartate 195, and asparagine 242 each contribute to the S-adenosyl-L-methionine site.

The protein belongs to the methyltransferase superfamily. PrmA family.

The protein resides in the cytoplasm. It catalyses the reaction L-lysyl-[protein] + 3 S-adenosyl-L-methionine = N(6),N(6),N(6)-trimethyl-L-lysyl-[protein] + 3 S-adenosyl-L-homocysteine + 3 H(+). Its function is as follows. Methylates ribosomal protein L11. This chain is Ribosomal protein L11 methyltransferase, found in Trichormus variabilis (strain ATCC 29413 / PCC 7937) (Anabaena variabilis).